The chain runs to 76 residues: Large ribosomal subunit protein eL20 (76 aa).

Belongs to the eukaryotic ribosomal protein eL20 family. In terms of assembly, part of the 50S ribosomal subunit. Binds 23S rRNA.

The polypeptide is Large ribosomal subunit protein eL20 (Methanocaldococcus jannaschii (strain ATCC 43067 / DSM 2661 / JAL-1 / JCM 10045 / NBRC 100440) (Methanococcus jannaschii)).